Here is a 797-residue protein sequence, read N- to C-terminus: Sodium/hydrogen exchanger 4 (797 aa).

The Cytoplasmic segment spans residues 1 to 13 (MGPAMFMAFRLWN). Residues 14-28 (WLLLLAVLTRSEATS) constitute an intramembrane region (name=A/M1). Residues 29–69 (YVNESSNPTAQQAPDARFAASSSDPDEGISVFELDYDYVQI) are Cytoplasmic-facing. The interval 32–52 (ESSNPTAQQAPDARFAASSSD) is disordered. The name=B/M2 intramembrane region spans 70 to 90 (PYEVTLWILLASLAKIGFHLY). The Cytoplasmic segment spans residues 91-94 (HRLP). A helical transmembrane segment spans residues 95–114 (HLMPESCLLIIVGALVGGII). Topologically, residues 115 to 127 (FGTHHKSPPVMDS) are extracellular. A helical membrane pass occupies residues 128-148 (SIYFLYLLPPIVLESGYFMPT). At 149–154 (RPFFEN) the chain is on the cytoplasmic side. A helical membrane pass occupies residues 155–175 (IGSILWWAGLGALINAFGIGL). The Extracellular portion of the chain corresponds to 176–194 (SLYFICQIKAFGLGDINLL). A helical transmembrane segment spans residues 195 to 215 (HNLLFGSLISAVDPVAVLAVF). Residues 216–226 (EEARVNEQLYM) lie on the Cytoplasmic side of the membrane. The helical transmembrane segment at 227–247 (MIFGEALLNDGISVVLYNILI) threads the bilayer. The Extracellular portion of the chain corresponds to 248 to 270 (AFTKMHKFEDIEAVDILAGCARF). A helical membrane pass occupies residues 271–291 (VIVGCGGVFFGIIFGFISAFI). At 292–304 (TRFTQNISAIEPL) the chain is on the cytoplasmic side. Residues 305–325 (IVFMFSYLSYLAAETLYLSGI) form a helical membrane-spanning segment. The Extracellular portion of the chain corresponds to 326 to 352 (LAITACAVTMKKYVEENVSQTSYTTIK). A glycan (N-linked (GlcNAc...) asparagine) is linked at asparagine 342. A helical membrane pass occupies residues 353-373 (YFMKMLSSVSETLIFIFMGVS). The Cytoplasmic segment spans residues 374-384 (TIGKNHEWNWA). A helical transmembrane segment spans residues 385–405 (FICFTLLFCQIWRAISVFTLF). At 406–420 (YVSNQFRTFPFSIKD) the chain is on the extracellular side. The name=L intramembrane region spans 421-441 (QFIIFYSGVRGAGSFSLAFLL). Residues 442–450 (PLSLFPRKK) lie on the Extracellular side of the membrane. Residues 451 to 471 (LFVTATLVVTYFTVFFQGITI) traverse the membrane as a helical segment. The Cytoplasmic segment spans residues 472-797 (GPLVRYLDVR…KSHSPLLHRK (326 aa)). Acidic residues predominate over residues 759 to 769 (YDSGEQTEEET). The interval 759–797 (YDSGEQTEEETSAILSRWTAEHRHSTEHHKSHSPLLHRK) is disordered. Residues 783–797 (STEHHKSHSPLLHRK) are compositionally biased toward basic residues.

The protein belongs to the monovalent cation:proton antiporter 1 (CPA1) transporter (TC 2.A.36) family. Homodimer; each protomer has one site for sodium and one site for proton binding. Interacts with CHP1 and CHP2. In terms of processing, may be phosphorylated. Expressed in kidney. Expressed in uterus and endometrial epithelial cells. Expressed in the inner segments of inner medullary collecting ducts (IMCD) in kidney. Expressed in AGTR1-positive neurons in organum vasculosum of the lamina terminalis (at protein level).

The protein resides in the basolateral cell membrane. It is found in the apical cell membrane. The protein localises to the zymogen granule membrane. The enzyme catalyses Na(+)(in) + H(+)(out) = Na(+)(out) + H(+)(in). It carries out the reaction Na(+)(out) + NH4(+)(in) = Na(+)(in) + NH4(+)(out). Its activity is regulated as follows. Up-regulated in response to high extracellular sodium concentration. Functionally, electroneutral antiporter that exchanges sodium for protons or ammonium ions at the basolateral membrane of epithelia to regulate cell volume and intracellular pH upon hypertonic conditions. As part of transcellular ammonia transport in renal tubules, mediates basolateral ammonium extrusion in the medullary thick ascending limb, regulating the corticopapillary ammonium gradient and overall renal acid excretion. Mediates sodium:proton exchange in gastric parietal cells secondary to cAMP-dependent acid secretion and hyperosmolarity. Possibly coupled to chloride:bicarbonate antiporter, enables loading of parietal cells with sodium and chloride ions to maintain cell volume and normal gastric acid secretion. Functions as a sodium sensor in neurons of organum vasculosum of the lamina terminalis where it regulates water intake in response to increased sodium concentration in body fluids. This is Sodium/hydrogen exchanger 4 (Slc9a4) from Mus musculus (Mouse).